The chain runs to 273 residues: Putative phosphoenolpyruvate synthase regulatory protein (273 aa).

Residue Gly-153 to Thr-160 coordinates ADP.

The protein belongs to the pyruvate, phosphate/water dikinase regulatory protein family. PSRP subfamily.

The catalysed reaction is [pyruvate, water dikinase] + ADP = [pyruvate, water dikinase]-phosphate + AMP + H(+). It carries out the reaction [pyruvate, water dikinase]-phosphate + phosphate + H(+) = [pyruvate, water dikinase] + diphosphate. Functionally, bifunctional serine/threonine kinase and phosphorylase involved in the regulation of the phosphoenolpyruvate synthase (PEPS) by catalyzing its phosphorylation/dephosphorylation. This chain is Putative phosphoenolpyruvate synthase regulatory protein, found in Polaromonas sp. (strain JS666 / ATCC BAA-500).